An 84-amino-acid polypeptide reads, in one-letter code: Toxin Tb1 (84 aa).

A signal peptide spans Met-1–Cys-20. The LCN-type CS-alpha/beta domain occupies Lys-21–Gly-82. Cystine bridges form between Cys-31–Cys-81, Cys-35–Cys-57, Cys-43–Cys-62, and Cys-47–Cys-64. Position 81 is a cysteine amide (Cys-81).

It belongs to the long (4 C-C) scorpion toxin superfamily. Sodium channel inhibitor family. Beta subfamily. As to expression, expressed by the venom gland.

Its subcellular location is the secreted. Beta toxins bind voltage-independently at site-4 of sodium channels (Nav) and shift the voltage of activation toward more negative potentials thereby affecting sodium channel activation and promoting spontaneous and repetitive firing. Is lethal to mice. This Tityus bahiensis (Brazilian scorpion) protein is Toxin Tb1.